A 230-amino-acid chain; its full sequence is Ribosomal RNA large subunit methyltransferase E (230 aa).

Residues glycine 82, tryptophan 84, aspartate 100, aspartate 116, and aspartate 140 each contribute to the S-adenosyl-L-methionine site. The Proton acceptor role is filled by lysine 180.

It belongs to the class I-like SAM-binding methyltransferase superfamily. RNA methyltransferase RlmE family.

The protein localises to the cytoplasm. The enzyme catalyses uridine(2552) in 23S rRNA + S-adenosyl-L-methionine = 2'-O-methyluridine(2552) in 23S rRNA + S-adenosyl-L-homocysteine + H(+). Specifically methylates the uridine in position 2552 of 23S rRNA at the 2'-O position of the ribose in the fully assembled 50S ribosomal subunit. The protein is Ribosomal RNA large subunit methyltransferase E of Granulibacter bethesdensis (strain ATCC BAA-1260 / CGDNIH1).